The primary structure comprises 143 residues: 3-hydroxyacyl-[acyl-carrier-protein] dehydratase FabZ (143 aa).

The active site involves histidine 49.

The protein belongs to the thioester dehydratase family. FabZ subfamily.

The protein localises to the cytoplasm. It catalyses the reaction a (3R)-hydroxyacyl-[ACP] = a (2E)-enoyl-[ACP] + H2O. Functionally, involved in unsaturated fatty acids biosynthesis. Catalyzes the dehydration of short chain beta-hydroxyacyl-ACPs and long chain saturated and unsaturated beta-hydroxyacyl-ACPs. In Wolbachia pipientis wMel, this protein is 3-hydroxyacyl-[acyl-carrier-protein] dehydratase FabZ.